Here is a 1646-residue protein sequence, read N- to C-terminus: Monensin-resistant homolog 2 (1646 aa).

This sequence belongs to the MON2 family.

It localises to the golgi apparatus. May be required for traffic between late Golgi and early endosomes. In Caenorhabditis elegans, this protein is Monensin-resistant homolog 2 (mon-2).